The chain runs to 100 residues: Small ribosomal subunit protein uS14c (100 aa).

This sequence belongs to the universal ribosomal protein uS14 family. In terms of assembly, part of the 30S ribosomal subunit.

The protein resides in the plastid. It localises to the chloroplast. Binds 16S rRNA, required for the assembly of 30S particles. The protein is Small ribosomal subunit protein uS14c of Chlamydomonas reinhardtii (Chlamydomonas smithii).